The following is a 60-amino-acid chain: Cytotoxin SP15a (60 aa).

4 disulfides stabilise this stretch: cysteine 3–cysteine 21, cysteine 14–cysteine 38, cysteine 42–cysteine 53, and cysteine 54–cysteine 59.

This sequence belongs to the three-finger toxin family. Short-chain subfamily. Type IA cytotoxin sub-subfamily. Monomer in solution; Homodimer and oligomer in the presence of negatively charged lipids forming a pore with a size ranging between 20 and 30 Angstroms. In terms of tissue distribution, expressed by the venom gland.

Its subcellular location is the secreted. It localises to the target cell membrane. Shows cytolytic activity on many different cells by forming pore in lipid membranes. In vivo, increases heart rate or kills the animal by cardiac arrest. In addition, it binds to heparin with high affinity, interacts with Kv channel-interacting protein 1 (KCNIP1) in a calcium-independent manner, and binds to integrin alpha-V/beta-3 (ITGAV/ITGB3) with moderate affinity. This chain is Cytotoxin SP15a, found in Naja atra (Chinese cobra).